The following is a 900-amino-acid chain: Alanine--tRNA ligase (900 aa).

4 residues coordinate Zn(2+): His-587, His-591, Cys-691, and His-695.

It belongs to the class-II aminoacyl-tRNA synthetase family. The cofactor is Zn(2+).

It localises to the cytoplasm. The catalysed reaction is tRNA(Ala) + L-alanine + ATP = L-alanyl-tRNA(Ala) + AMP + diphosphate. Functionally, catalyzes the attachment of alanine to tRNA(Ala) in a two-step reaction: alanine is first activated by ATP to form Ala-AMP and then transferred to the acceptor end of tRNA(Ala). Also edits incorrectly charged Ser-tRNA(Ala) and Gly-tRNA(Ala) via its editing domain. This chain is Alanine--tRNA ligase, found in Aeropyrum pernix (strain ATCC 700893 / DSM 11879 / JCM 9820 / NBRC 100138 / K1).